We begin with the raw amino-acid sequence, 296 residues long: Ribosomal RNA small subunit methyltransferase A (296 aa).

Positions 32, 34, 59, 80, 105, and 130 each coordinate S-adenosyl-L-methionine.

It belongs to the class I-like SAM-binding methyltransferase superfamily. rRNA adenine N(6)-methyltransferase family. RsmA subfamily.

Its subcellular location is the cytoplasm. The enzyme catalyses adenosine(1518)/adenosine(1519) in 16S rRNA + 4 S-adenosyl-L-methionine = N(6)-dimethyladenosine(1518)/N(6)-dimethyladenosine(1519) in 16S rRNA + 4 S-adenosyl-L-homocysteine + 4 H(+). Its function is as follows. Specifically dimethylates two adjacent adenosines (A1518 and A1519) in the loop of a conserved hairpin near the 3'-end of 16S rRNA in the 30S particle. May play a critical role in biogenesis of 30S subunits. This chain is Ribosomal RNA small subunit methyltransferase A, found in Levilactobacillus brevis (strain ATCC 367 / BCRC 12310 / CIP 105137 / JCM 1170 / LMG 11437 / NCIMB 947 / NCTC 947) (Lactobacillus brevis).